A 70-amino-acid polypeptide reads, in one-letter code: Putative membrane protein insertion efficiency factor (70 aa).

This sequence belongs to the UPF0161 family.

The protein resides in the cell membrane. Its function is as follows. Could be involved in insertion of integral membrane proteins into the membrane. This Lachnoclostridium phytofermentans (strain ATCC 700394 / DSM 18823 / ISDg) (Clostridium phytofermentans) protein is Putative membrane protein insertion efficiency factor.